We begin with the raw amino-acid sequence, 152 residues long: Adenosine 5'-monophosphoramidase HNT1 (152 aa).

An HIT domain is found at 8 to 119 (IFCKIIKGEI…IPKKDEATGL (112 aa)). AMP is bound by residues 33–34 (DI), Asn93, 99–101 (HQV), and 106–108 (HFH). The Histidine triad motif signature appears at 104 to 108 (HVHFH). His106 (tele-AMP-histidine intermediate) is an active-site residue.

Belongs to the HINT family. Homodimer. It depends on Mg(2+) as a cofactor.

The catalysed reaction is adenosine 5'-phosphoramidate + H2O = AMP + NH4(+). Functionally, hydrolyzes adenosine 5'-monophosphoramidate substrates such as AMP-morpholidate, AMP-N-alanine methyl ester, AMP-alpha-acetyl lysine methyl ester and AMP-NH2. This chain is Adenosine 5'-monophosphoramidase HNT1, found in Candida albicans (strain SC5314 / ATCC MYA-2876) (Yeast).